A 267-amino-acid polypeptide reads, in one-letter code: Translation initiation factor 2 subunit alpha (267 aa).

The 72-residue stretch at 12–83 folds into the S1 motif domain; the sequence is GELVVATVKE…RKKQVDVSLK (72 aa).

It belongs to the eIF-2-alpha family. As to quaternary structure, heterotrimer composed of an alpha, a beta and a gamma chain.

In terms of biological role, eIF-2 functions in the early steps of protein synthesis by forming a ternary complex with GTP and initiator tRNA. The sequence is that of Translation initiation factor 2 subunit alpha from Hyperthermus butylicus (strain DSM 5456 / JCM 9403 / PLM1-5).